Here is a 138-residue protein sequence, read N- to C-terminus: Dehydratase iacD (138 aa).

The region spanning 18 to 113 is the EthD domain; the sequence is GVSEEDFIEW…LKDQDVWMDN (96 aa).

It belongs to the tpcK family.

The protein operates within secondary metabolite biosynthesis. Functionally, dehydratase; part of the gene cluster that mediates the biosynthesis of iso-A82775C, a enylepoxycyclohexane and biosynthetic precursor of the chloropestolide anticancer natural products. Within the cluster, the prenyltransferase iacE prenylates siccayne to generate pestalodiol E, using dimethylallyl diphosphate (DMAPP) as cosubstrate. The probable oxidoreductase iacF is then involved in the epoxidation of pestalodiol F to pestalodiol F, which is further converted to pestalofone A by the short-chain dehydrogenase/reductase iacG. Iso-A82775C is subsequently generated from pestalofone A by the short-chain dehydrogenase/reductase iacC. Iso-A82775C is further condensed with maldoxin via a Diels-Alder reaction to produce the anticancer natural products chloropestolides A to E. This chain is Dehydratase iacD, found in Pestalotiopsis fici (strain W106-1 / CGMCC3.15140).